The chain runs to 393 residues: Trehalose import ATP-binding protein SugC (393 aa).

Residues 4–235 (IVLDHVNKSY…PANLFVAGFI (232 aa)) form the ABC transporter domain. 37 to 44 (GPSGCGKT) contacts ATP. The Helical C-loop; LSGGQ motif motif lies at 135–139 (LSGGQ).

Belongs to the ABC transporter superfamily. In terms of assembly, monomer. Homodimerizes in the presence of ATP. The complex is composed of two ATP-binding proteins (SugC), two transmembrane proteins (SugA and SugB) and a solute-binding protein (LpqY).

The protein resides in the cell inner membrane. It carries out the reaction alpha,alpha-trehalose(out) + ATP + H2O = alpha,alpha-trehalose(in) + ADP + phosphate + H(+). Functionally, part of the ABC transporter complex LpqY-SugA-SugB-SugC, which is highly specific for uptake of trehalose. Involved in the recycling of extracellular trehalose released from trehalose-containing molecules synthesized by M.tuberculosis. Trehalose uptake is essential for virulence. Responsible for energy coupling to the transport system. The sequence is that of Trehalose import ATP-binding protein SugC (sugC) from Mycobacterium tuberculosis (strain CDC 1551 / Oshkosh).